Consider the following 550-residue polypeptide: Retron Ec78 probable ATPase (550 aa).

Residues 93–100 carry the ATP-binding motif; that stretch reads GNNGKGKT.

In terms of biological role, probable ATPase component of antiviral defense system retron Ec78, composed of a non-coding RNA (ncRNA), a reverse transcriptase (RT), this protein and a putative HNH endonuclease. Expression of retron Ec78 confers protection against bacteriophage T5. At multiplicity of infection (MOI) of 0.02 cultures slow growth when infected with T5 but do not collapse, at MOI 2 cultures enter growth stasis. The chain is Retron Ec78 probable ATPase from Escherichia coli.